A 305-amino-acid chain; its full sequence is HPr kinase/phosphorylase (305 aa).

Residues His-138 and Lys-159 contribute to the active site. 153 to 160 (GESGIGKS) serves as a coordination point for ATP. Ser-160 is a binding site for Mg(2+). Residue Asp-177 is the Proton acceptor; for phosphorylation activity. Proton donor; for dephosphorylation activity of the active site. The segment at 201 to 210 (IEIRGIGILD) is important for the catalytic mechanism of both phosphorylation and dephosphorylation. Glu-202 serves as a coordination point for Mg(2+). Residue Arg-243 is part of the active site. Positions 264–269 (PVRPGR) are important for the catalytic mechanism of dephosphorylation.

This sequence belongs to the HPrK/P family. As to quaternary structure, homohexamer. Requires Mg(2+) as cofactor.

The enzyme catalyses [HPr protein]-L-serine + ATP = [HPr protein]-O-phospho-L-serine + ADP + H(+). It catalyses the reaction [HPr protein]-O-phospho-L-serine + phosphate + H(+) = [HPr protein]-L-serine + diphosphate. Its function is as follows. Catalyzes the ATP- as well as the pyrophosphate-dependent phosphorylation of a specific serine residue in HPr, a phosphocarrier protein of the phosphoenolpyruvate-dependent sugar phosphotransferase system (PTS). HprK/P also catalyzes the pyrophosphate-producing, inorganic phosphate-dependent dephosphorylation (phosphorolysis) of seryl-phosphorylated HPr (P-Ser-HPr). The two antagonistic activities of HprK/P are regulated by several intracellular metabolites, which change their concentration in response to the absence or presence of rapidly metabolisable carbon sources (glucose, fructose, etc.) in the growth medium. Therefore, by controlling the phosphorylation state of HPr, HPrK/P is a sensor enzyme that plays a major role in the regulation of carbon metabolism and sugar transport: it mediates carbon catabolite repression (CCR), and regulates PTS-catalyzed carbohydrate uptake and inducer exclusion. The sequence is that of HPr kinase/phosphorylase from Thermoanaerobacter pseudethanolicus (strain ATCC 33223 / 39E) (Clostridium thermohydrosulfuricum).